The sequence spans 277 residues: Energy-coupling factor transporter ATP-binding protein EcfA (277 aa).

Residues 4 to 238 (LETRDLTHIY…PELLTQTRLD (235 aa)) enclose the ABC transporter domain. 37–44 (GPNGAGKS) is an ATP binding site.

The protein belongs to the ABC transporter superfamily. Energy-coupling factor EcfA family. As to quaternary structure, forms a stable energy-coupling factor (ECF) transporter complex composed of 2 membrane-embedded substrate-binding proteins (S component), 2 ATP-binding proteins (A component) and 2 transmembrane proteins (T component).

The protein resides in the cell membrane. Its function is as follows. ATP-binding (A) component of a common energy-coupling factor (ECF) ABC-transporter complex. Unlike classic ABC transporters this ECF transporter provides the energy necessary to transport a number of different substrates. This Methanoculleus marisnigri (strain ATCC 35101 / DSM 1498 / JR1) protein is Energy-coupling factor transporter ATP-binding protein EcfA.